Reading from the N-terminus, the 369-residue chain is Geranylgeranyl pyrophosphate synthase, chloroplastic (369 aa).

Positions 118, 121, and 150 each coordinate isopentenyl diphosphate. Residues Asp-157 and Asp-163 each contribute to the Mg(2+) site. Dimethylallyl diphosphate is bound at residue Arg-168. Isopentenyl diphosphate is bound at residue Arg-169. Dimethylallyl diphosphate-binding residues include Lys-254, Thr-255, Gln-292, Lys-309, and Lys-319.

This sequence belongs to the FPP/GGPP synthase family. As to quaternary structure, monomer. Requires Mg(2+) as cofactor.

The protein resides in the plastid. The protein localises to the chloroplast. It carries out the reaction isopentenyl diphosphate + dimethylallyl diphosphate = (2E)-geranyl diphosphate + diphosphate. The catalysed reaction is isopentenyl diphosphate + (2E)-geranyl diphosphate = (2E,6E)-farnesyl diphosphate + diphosphate. It catalyses the reaction isopentenyl diphosphate + (2E,6E)-farnesyl diphosphate = (2E,6E,10E)-geranylgeranyl diphosphate + diphosphate. Its pathway is isoprenoid biosynthesis; farnesyl diphosphate biosynthesis; farnesyl diphosphate from geranyl diphosphate and isopentenyl diphosphate: step 1/1. It participates in isoprenoid biosynthesis; geranyl diphosphate biosynthesis; geranyl diphosphate from dimethylallyl diphosphate and isopentenyl diphosphate: step 1/1. It functions in the pathway isoprenoid biosynthesis; geranylgeranyl diphosphate biosynthesis; geranylgeranyl diphosphate from farnesyl diphosphate and isopentenyl diphosphate: step 1/1. Its function is as follows. Catalyzes the trans-addition of the three molecules of IPP onto DMAPP to form geranylgeranyl pyrophosphate. The sequence is that of Geranylgeranyl pyrophosphate synthase, chloroplastic from Capsicum annuum (Capsicum pepper).